The primary structure comprises 233 residues: Endo-1,4-beta-xylanase 1 (233 aa).

Positions 1-20 (MVSFTSIVTAVVALAGSALA) are cleaved as a signal peptide. N27 is a glycosylation site (N-linked (GlcNAc...) asparagine). Residues 40-230 (QSTPSSTGRH…SAGNSNINVQ (191 aa)) form the GH11 domain. The Nucleophile role is filled by E126. Residue E217 is the Proton donor of the active site.

This sequence belongs to the glycosyl hydrolase 11 (cellulase G) family.

Its subcellular location is the secreted. It carries out the reaction Endohydrolysis of (1-&gt;4)-beta-D-xylosidic linkages in xylans.. It participates in glycan degradation; xylan degradation. In terms of biological role, endo-1,4-beta-xylanase involved in the hydrolysis of xylan, a major structural heterogeneous polysaccharide found in plant biomass representing the second most abundant polysaccharide in the biosphere, after cellulose. Accounts for approximately 70 percent of the endoxylanase activity in the culture filtrate. The polypeptide is Endo-1,4-beta-xylanase 1 (XYL1) (Pyricularia grisea (Crabgrass-specific blast fungus)).